Reading from the N-terminus, the 485-residue chain is Bcl-2-like protein 13 (485 aa).

A BH4 motif is present at residues 14–30 (ETKYVVLSYLGLLSQEK). Ser-38 bears the Phosphoserine mark. The BH3 motif lies at 100–116 (MEDCLAHLGEKVSQELK). The BH1 motif lies at 147 to 157 (ASGWNKILVPL). The short motif at 193 to 206 (YIIQQGGWGTVFSL) is the BH2 element. The tract at residues 218-248 (AEDSNDIYILPSDNSGQVSPPESPTVTTSWQ) is disordered. Residues 229–248 (SDNSGQVSPPESPTVTTSWQ) show a composition bias toward polar residues. One copy of the A repeat lies at 246–256 (SWQSESLPVSL). A phosphoserine mark is found at Ser-259, Ser-261, Ser-303, Ser-326, Ser-371, Ser-375, Ser-410, Ser-420, Ser-426, Ser-429, and Ser-444. An A; approximate repeat occupies 261 to 271 (SWHTESLPVSL). The disordered stretch occupies residues 418–451 (EESLVEELSPASEKKPVPPSEGKSRLSPAGEMKP). The stretch at 425 to 441 (LSPASEKKPVPPSEGKS) is one B repeat. The stretch at 443–459 (LSPAGEMKPMPLSEGKS) is one B; approximate repeat. A helical transmembrane segment spans residues 460 to 480 (ILLFGGAAAVAILAVAIGVAL).

It belongs to the Bcl-2 family. In terms of assembly, monomer. In terms of tissue distribution, ubiquitous, with the highest levels of expression in heart, placenta and pancreas.

The protein localises to the mitochondrion membrane. It is found in the nucleus. Functionally, may promote the activation of caspase-3 and apoptosis. This Homo sapiens (Human) protein is Bcl-2-like protein 13 (BCL2L13).